The following is a 214-amino-acid chain: RNA-free ribonuclease P (214 aa).

The protein belongs to the HARP family.

The enzyme catalyses Endonucleolytic cleavage of RNA, removing 5'-extranucleotides from tRNA precursor.. Functionally, RNA-free RNase P that catalyzes the removal of the 5'-leader sequence from pre-tRNA to produce the mature 5'-terminus. This is RNA-free ribonuclease P from Aeropyrum pernix (strain ATCC 700893 / DSM 11879 / JCM 9820 / NBRC 100138 / K1).